We begin with the raw amino-acid sequence, 398 residues long: Argininosuccinate synthase (398 aa).

10–18 is an ATP binding site; it reads AYSGGLDTS. Y87 contacts L-citrulline. G117 is an ATP binding site. L-aspartate is bound by residues T119, N123, and D124. An L-citrulline-binding site is contributed by N123. Residues R127, S175, E260, and Y272 each contribute to the L-citrulline site.

Belongs to the argininosuccinate synthase family. Type 1 subfamily. Homotetramer.

The protein resides in the cytoplasm. The enzyme catalyses L-citrulline + L-aspartate + ATP = 2-(N(omega)-L-arginino)succinate + AMP + diphosphate + H(+). It functions in the pathway amino-acid biosynthesis; L-arginine biosynthesis; L-arginine from L-ornithine and carbamoyl phosphate: step 2/3. The chain is Argininosuccinate synthase from Lactococcus lactis subsp. lactis (strain IL1403) (Streptococcus lactis).